The chain runs to 570 residues: Glutamate--tRNA ligase (570 aa).

A 'HIGH' region motif is present at residues 107–117 (PNPDFVLHLGS).

This sequence belongs to the class-I aminoacyl-tRNA synthetase family. Glutamate--tRNA ligase type 2 subfamily.

Its subcellular location is the cytoplasm. It catalyses the reaction tRNA(Glu) + L-glutamate + ATP = L-glutamyl-tRNA(Glu) + AMP + diphosphate. Functionally, catalyzes the attachment of glutamate to tRNA(Glu) in a two-step reaction: glutamate is first activated by ATP to form Glu-AMP and then transferred to the acceptor end of tRNA(Glu). This is Glutamate--tRNA ligase from Pyrobaculum islandicum (strain DSM 4184 / JCM 9189 / GEO3).